Reading from the N-terminus, the 311-residue chain is Sulfate adenylyltransferase subunit 2 (311 aa).

It belongs to the PAPS reductase family. CysD subfamily. As to quaternary structure, heterodimer composed of CysD, the smaller subunit, and CysN.

It carries out the reaction sulfate + ATP + H(+) = adenosine 5'-phosphosulfate + diphosphate. It participates in sulfur metabolism; hydrogen sulfide biosynthesis; sulfite from sulfate: step 1/3. Functionally, with CysN forms the ATP sulfurylase (ATPS) that catalyzes the adenylation of sulfate producing adenosine 5'-phosphosulfate (APS) and diphosphate, the first enzymatic step in sulfur assimilation pathway. APS synthesis involves the formation of a high-energy phosphoric-sulfuric acid anhydride bond driven by GTP hydrolysis by CysN coupled to ATP hydrolysis by CysD. The sequence is that of Sulfate adenylyltransferase subunit 2 from Caulobacter vibrioides (strain ATCC 19089 / CIP 103742 / CB 15) (Caulobacter crescentus).